The following is a 558-amino-acid chain: Dihydroxy-acid dehydratase (558 aa).

Position 78 (D78) interacts with Mg(2+). C119 is a [2Fe-2S] cluster binding site. Mg(2+) is bound by residues D120 and K121. An N6-carboxylysine modification is found at K121. C192 lines the [2Fe-2S] cluster pocket. E446 serves as a coordination point for Mg(2+). Residue S472 is the Proton acceptor of the active site.

Belongs to the IlvD/Edd family. In terms of assembly, homodimer. Requires [2Fe-2S] cluster as cofactor. The cofactor is Mg(2+).

It carries out the reaction (2R)-2,3-dihydroxy-3-methylbutanoate = 3-methyl-2-oxobutanoate + H2O. It catalyses the reaction (2R,3R)-2,3-dihydroxy-3-methylpentanoate = (S)-3-methyl-2-oxopentanoate + H2O. It functions in the pathway amino-acid biosynthesis; L-isoleucine biosynthesis; L-isoleucine from 2-oxobutanoate: step 3/4. Its pathway is amino-acid biosynthesis; L-valine biosynthesis; L-valine from pyruvate: step 3/4. Functions in the biosynthesis of branched-chain amino acids. Catalyzes the dehydration of (2R,3R)-2,3-dihydroxy-3-methylpentanoate (2,3-dihydroxy-3-methylvalerate) into 2-oxo-3-methylpentanoate (2-oxo-3-methylvalerate) and of (2R)-2,3-dihydroxy-3-methylbutanoate (2,3-dihydroxyisovalerate) into 2-oxo-3-methylbutanoate (2-oxoisovalerate), the penultimate precursor to L-isoleucine and L-valine, respectively. In Campylobacter jejuni subsp. doylei (strain ATCC BAA-1458 / RM4099 / 269.97), this protein is Dihydroxy-acid dehydratase.